Consider the following 106-residue polypeptide: MIITTTPQIEGRRITRYCGVVAGEAILGANVFKDLFAGLRDIVGGRSATYERELQRAREIALKELEERAQELGANAVVGVDLDYEVLGQGNGMLMVSASGTAVVLE.

It belongs to the UPF0145 family.

The sequence is that of UPF0145 protein Daci_3728 from Delftia acidovorans (strain DSM 14801 / SPH-1).